We begin with the raw amino-acid sequence, 367 residues long: 3-dehydroquinate synthase (367 aa).

Residues glycine 112–aspartate 116, threonine 136–threonine 137, lysine 149, lysine 158, and threonine 176–threonine 179 contribute to the NAD(+) site. Zn(2+)-binding residues include glutamate 191, histidine 256, and histidine 273.

The protein belongs to the sugar phosphate cyclases superfamily. Dehydroquinate synthase family. The cofactor is NAD(+). Requires Co(2+) as cofactor. Zn(2+) is required as a cofactor.

The protein localises to the cytoplasm. It carries out the reaction 7-phospho-2-dehydro-3-deoxy-D-arabino-heptonate = 3-dehydroquinate + phosphate. Its pathway is metabolic intermediate biosynthesis; chorismate biosynthesis; chorismate from D-erythrose 4-phosphate and phosphoenolpyruvate: step 2/7. Its function is as follows. Catalyzes the conversion of 3-deoxy-D-arabino-heptulosonate 7-phosphate (DAHP) to dehydroquinate (DHQ). The sequence is that of 3-dehydroquinate synthase from Prochlorococcus marinus (strain SARG / CCMP1375 / SS120).